Here is a 131-residue protein sequence, read N- to C-terminus: Large ribosomal subunit protein bL12 (131 aa).

It belongs to the bacterial ribosomal protein bL12 family. As to quaternary structure, homodimer. Part of the ribosomal stalk of the 50S ribosomal subunit. Forms a multimeric L10(L12)X complex, where L10 forms an elongated spine to which 2 to 4 L12 dimers bind in a sequential fashion. Binds GTP-bound translation factors.

Functionally, forms part of the ribosomal stalk which helps the ribosome interact with GTP-bound translation factors. Is thus essential for accurate translation. The polypeptide is Large ribosomal subunit protein bL12 (Prochlorococcus marinus (strain NATL1A)).